The following is a 399-amino-acid chain: S-adenosylmethionine synthase (399 aa).

His17 provides a ligand contact to ATP. Asp19 contributes to the Mg(2+) binding site. Glu45 provides a ligand contact to K(+). Glu58 and Gln101 together coordinate L-methionine. The tract at residues 101-111 is flexible loop; sequence QSADIAMGVDQ. ATP-binding positions include 177–179, 244–245, Asp253, 259–260, Ala276, and Lys280; these read DGK, RF, and RK. Asp253 provides a ligand contact to L-methionine. Lys284 contributes to the L-methionine binding site.

It belongs to the AdoMet synthase family. In terms of assembly, homotetramer; dimer of dimers. Mg(2+) serves as cofactor. Requires K(+) as cofactor.

The protein localises to the cytoplasm. The catalysed reaction is L-methionine + ATP + H2O = S-adenosyl-L-methionine + phosphate + diphosphate. Its pathway is amino-acid biosynthesis; S-adenosyl-L-methionine biosynthesis; S-adenosyl-L-methionine from L-methionine: step 1/1. Functionally, catalyzes the formation of S-adenosylmethionine (AdoMet) from methionine and ATP. The overall synthetic reaction is composed of two sequential steps, AdoMet formation and the subsequent tripolyphosphate hydrolysis which occurs prior to release of AdoMet from the enzyme. The sequence is that of S-adenosylmethionine synthase from Bacillus cereus (strain B4264).